The chain runs to 2267 residues: MEGSYQMNGILNGMSNSRHPSSPSEVDEFCKALGGDSPIHSVLVANNGMAAVKFMRSIRTWALETFGTEKAILLVAMATPEDLKINAEHIRIADQFVEVPGGTNNNNYANVQLIVEIAERTHVSAVWPGWGHASENPELPDALKEKGIIFLGPPSAAMAALGDKIGSSLIAQAAGVPTLPWSGSHVKIPPESCNSIPEEMYRSACVSTTEEAVASCQVVGYPAMIKASWGGGGKGIRKVHNDDEVRALFKQVQGEVPGSPIFIMKVASQSRHLEVQLLCDKHGNVAALHSRDCSVQRRHQKIIEEGPITVAPSETVKELEQAARRLAKCVHYVGAATVEYLYSMETGEYYFLELNPRLQVEHPVTEWIAEINLPAAQVVVGMGVPLYNIPEIRRFYGMEHGGGYDAWRKISAVATKFDLDNAQSVKPKGHCVAVRVTSEDPDDGFKPTSGRVEELNFKSKPNVWAYFSVKSGGAIHEFSDSQFGHVFAFGESRSLAIANMVLGLKEIQIRGEIRTNVDYTVDLLNAAEYRENKIHTGWLDSRIAMRVRAERPPWYLSVVGGALYEASSRSSSVVTDYVGYLSKGQIPPKHISLVNLTVTLNIEGSKYTIETVRRGPRSYTLRMNGSEIEAEIHSLRDGGLLMQLDGNSHVIYAETEAAGTRLLINGRTCLLQKEHDPSKLLADTPCKLLRFLVADGSHVDADTPYAEVEVMKMCMPLLLPASGVIHFVMPEGQAMQAADLIARLDLDDPSSVRRAEPFHGTFPKLGPPTAVSGKVHQKFAASVNSAHMILAGYEHNINEVVQDLLNCLDSPELPFLQWQELMSVLATRLPKDLRNELDGKYKEYELNSDFRKNKDFPAKLLRGIIEANLAYCSEKDRVTNERLVEPLMSLVKSYEGGRESHARVVVKSLFEEYLSVEELFSDNIQSDVIERLRLQHAKDLEKVVYIVFSHQGVRTKNKLILRLMEALVYPNPSAYRDQLIRFSGLNNTVYSELALKASQLLEHTKLSELRTSIARSLSELEMFTEEGERVSTPRRKMAINERMEDLVGAPLAVEDALVALFDHSDPTLQRRVVETYIRRLYQPYLVKGSVRMQWHRSGLIALWEFSEEHIKQRNGQDAMSLKQQVEDPEEKRWGVMVVIKSLQYLSSAIDAALKETSHYKAGAGNVSNGNSASSSHGNMLHIALVGINNQMSTLQDSGDEDQAQERINKISKILKDSTVTSHLNGAGVRVVSCIIQRDEGRPPMRHSFQWSVDKIYYEEDPMLRHVEPPLSTFLELNKVNLDGYNEVKYTPSRDRQWHIYTLIKNKKDQRSNDQRLFLRTIVRQPGVTNGFLSGNVDNEVGRAQASSSYTSSSILRSLMAALEEIELHAHNETVRSSYSHMYLCILRVQQLFDLIPFSRTIDNVGQDEATACTLLKNMALNIYEHVGVRMHRLSVCQWEVKLWLDCDGQASGAWRVVVTNVTGHTCTVDIYREVEDSNTHKLFYHSVTPSLGPLHGIVLDEPYKPLDAIDLKRYSARKNETTYCYDFPLAFETALKRSWKSTLSVVAEANEHNKSYAKVTELMFADSTGSWGTPLVPVERSPGINDIGIVAWIMKLSTPEFPSGREIIVVSNDVTFKAGSFGPREDAFFDAVTNLACERKLPLIYLSATAGARLGVAEEIKACFNVGWSDDESPERGFHYIYLTEQDYSRLSSSVIAHELKLESGETRWVVDTIVGKEDGLGCENLHGSGAIASAYSKAYKETFTLTFVTGRAVGIGAYLARLGMRCIQRLDQPIILTGFSALNKLLGREVYSSHMQLGGPKIMATNGVVHLTVSDDLEGVSAILKWLSYVPPYVGGPLPIMKPLDPPDRPVTYFPENSCDARAAICGVQDSQGKWMGGMFDRESFVETLEGWAKTVVTGRAKLGGIPVGVIAVETQTMMQVIPADPGQLDSAERVVPQAGQVWFPDSATKTAQALLDFNREELPLFILANWRGFSGGQRDLFEGILQAGSNIVENLRTYNQPAFVYIPMGGELRGGAWVVVDSKINPEHIEMYAERTAKGNVLEPEGLVEIKFRPKELEECMLRLDPELIKLSTRLREMKKENAGLSEMDTTRRSIIARMKQLMPIYTQVATRFAELHDTSARMAAKGVIGKVVDWEESRSFFYRRLRRRVTEDALAKEIREAAGEQLSQKSALDYIKKWYLSSNGSDGNSEKWNNDEAFFAWKDDPTNYENQLEELKAERVSKWLSRLAESPDVKALPNGLSIVLNKMNPSKREQVIDGLRQLLG.

In terms of domain architecture, Biotin carboxylation spans 38–544 (PIHSVLVANN…HTGWLDSRIA (507 aa)). One can recognise an ATP-grasp domain in the interval 190–384 (PESCNSIPEE…AAQVVVGMGV (195 aa)). 216 to 273 (CQVVGYPAMIKASWGGGGKGIRKVHNDDEVRALFKQVQGEVPGSPIFIMKVASQSRHL) contacts ATP. Glu339, Glu353, and Asn355 together coordinate Mg(2+). Positions 339, 353, and 355 each coordinate Mn(2+). Residue Arg357 is part of the active site. The 75-residue stretch at 671–745 (LQKEHDPSKL…QAADLIARLD (75 aa)) folds into the Biotinyl-binding domain. Lys712 carries the post-translational modification N6-biotinyllysine. The CoA carboxyltransferase N-terminal domain occupies 1502–1843 (PYKPLDAIDL…YVGGPLPIMK (342 aa)). The carboxyltransferase stretch occupies residues 1502-2163 (PYKPLDAIDL…EDALAKEIRE (662 aa)). 3 residues coordinate CoA: Arg1752, Lys2053, and Arg2055. A CoA carboxyltransferase C-terminal domain is found at 1847 to 2163 (PPDRPVTYFP…EDALAKEIRE (317 aa)).

Homodimer. It depends on Mg(2+) as a cofactor. Requires Mn(2+) as cofactor. Biotin serves as cofactor.

Its subcellular location is the cytoplasm. The protein resides in the cytosol. The catalysed reaction is hydrogencarbonate + acetyl-CoA + ATP = malonyl-CoA + ADP + phosphate + H(+). The enzyme catalyses N(6)-biotinyl-L-lysyl-[protein] + hydrogencarbonate + ATP = N(6)-carboxybiotinyl-L-lysyl-[protein] + ADP + phosphate + H(+). It functions in the pathway lipid metabolism; malonyl-CoA biosynthesis; malonyl-CoA from acetyl-CoA: step 1/1. In terms of biological role, multifunctional enzyme that catalyzes the carboxylation of acetyl-CoA, forming malonyl-CoA, which is used in the plastid for fatty acid synthesis and in the cytosol in various biosynthetic pathways including fatty acid elongation. This chain is Acetyl-CoA carboxylase 1 (ACC1), found in Oryza sativa subsp. japonica (Rice).